Here is a 153-residue protein sequence, read N- to C-terminus: Cyanate hydratase (153 aa).

Active-site residues include Arg-88, Glu-91, and Ser-114.

This sequence belongs to the cyanase family.

It catalyses the reaction cyanate + hydrogencarbonate + 3 H(+) = NH4(+) + 2 CO2. Its function is as follows. Catalyzes the reaction of cyanate with bicarbonate to produce ammonia and carbon dioxide. In Mycolicibacterium vanbaalenii (strain DSM 7251 / JCM 13017 / BCRC 16820 / KCTC 9966 / NRRL B-24157 / PYR-1) (Mycobacterium vanbaalenii), this protein is Cyanate hydratase.